The following is a 755-amino-acid chain: 17S U2 SnRNP complex component HTATSF1 (755 aa).

Disordered regions lie at residues 1-53 (MSGT…YEWD) and 81-122 (GASS…KAES). Serine 2 is modified (N-acetylserine). Residues 90 to 122 (EDVHARTAEEPPQEKAPEPTDARKKGEKRKAES) show a composition bias toward basic and acidic residues. 2 consecutive RRM domains span residues 133 to 218 (TNVY…VAKF) and 264 to 349 (RVVI…AWDG). The interval 259 to 353 (RMRHERVVII…AQAWDGTTDY (95 aa)) is U2AF homology motif (UHM). Lysine 297 carries the N6-acetyllysine modification. The tract at residues 380-415 (RGLRRSDSVSASERAGPSRARHFSEHPSTSKMNAQE) is disordered. The mediates interaction with the P-TEFb complex stretch occupies residues 381–755 (GLRRSDSVSA…LSSDDDDDDI (375 aa)). Residues serine 387, serine 403, serine 407, and serine 409 each carry the phosphoserine modification. The segment covering 405–415 (HPSTSKMNAQE) has biased composition (polar residues). Residues lysine 429 and lysine 430 each participate in a glycyl lysine isopeptide (Lys-Gly) (interchain with G-Cter in SUMO2) cross-link. Residues 433–755 (KTEDGGEFEE…LSSDDDDDDI (323 aa)) form a disordered region. Phosphoserine occurs at positions 445, 452, and 453. The span at 462-476 (CPEKESEEGCPKRGF) shows a compositional bias: basic and acidic residues. Phosphoserine is present on residues serine 481, serine 485, serine 494, serine 498, serine 521, and serine 529. A compositionally biased stretch (basic and acidic residues) spans 508–538 (LKNDCEENGLAKESEDDLNKESEEEVGPTKE). Acidic residues predominate over residues 539–552 (SEEDDSEKESDEDC). A compositionally biased stretch (basic and acidic residues) spans 553–563 (SEKQSEDGSER). A phosphoserine mark is found at serine 557, serine 561, and serine 579. Residues 564–579 (EFEENGLEKDLDEEGS) are compositionally biased toward acidic residues. Over residues 580 to 590 (EKELHENVLDK) the composition is skewed to basic and acidic residues. Positions 591–606 (ELEENDSENSEFEDDG) are enriched in acidic residues. Phosphoserine occurs at positions 597, 600, 607, 616, and 624. Composition is skewed to acidic residues over residues 613-633 (EEGS…EEDT) and 640-651 (DESDEKEDEEYA). Threonine 633 carries the post-translational modification Phosphothreonine. Serine 642 is modified (phosphoserine). Residues 652–674 (DEKGLEAADKKAEEGDADEKLFE) are compositionally biased toward basic and acidic residues. The segment covering 675–713 (ESDDKEDEDADGKEVEDADEKLFEDDDSNEKLFDEEEDS) has biased composition (acidic residues). Phosphoserine is present on residues serine 676, serine 702, serine 713, serine 714, and serine 721. Residues 714–725 (SEKLFDDSDERG) are compositionally biased toward basic and acidic residues. At serine 748 the chain carries Phosphoserine; by CK2.

It belongs to the HTATSF1 family. In terms of assembly, component of the 17S U2 SnRNP complex, a ribonucleoprotein complex that contains small nuclear RNA (snRNA) U2 and a number of specific proteins. Within the 17S U2 SnRNP complex, interacts (via UHM region) directly with SF3B1. Component of a complex which is at least composed of HTATSF1/Tat-SF1, the P-TEFb complex components CDK9 and CCNT1, RNA polymerase II, SUPT5H, and NCL/nucleolin. Interacts with GTF2F2/RAP30 and POLR2A. Interacts with TCERG1/CA150. Interacts with (poly-ADP-ribosylated) RPA1; promoting HTATSF1 recruitment to DNA damage sites. Interacts (when phosphorylated) with TOPBP1; promoting recruitment of TOPBP1 to DNA damage sites during S-phase. Phosphorylation at Ser-748 by CK2 during S-phase in response to DNA damage promotes interaction with TOPBP1 and double-strand break (DSB) repair via homologous recombination. Widely expressed.

The protein localises to the nucleus. It is found in the chromosome. Component of the 17S U2 SnRNP complex of the spliceosome, a large ribonucleoprotein complex that removes introns from transcribed pre-mRNAs. The 17S U2 SnRNP complex (1) directly participates in early spliceosome assembly and (2) mediates recognition of the intron branch site during pre-mRNA splicing by promoting the selection of the pre-mRNA branch-site adenosine, the nucleophile for the first step of splicing. Within the 17S U2 SnRNP complex, HTATSF1 is required to stabilize the branchpoint-interacting stem loop. HTATSF1 is displaced from the 17S U2 SnRNP complex before the stable addition of the 17S U2 SnRNP complex to the spliceosome, destabilizing the branchpoint-interacting stem loop and allowing to probe intron branch site sequences. Also acts as a regulator of transcriptional elongation, possibly by mediating the reciprocal stimulatory effect of splicing on transcriptional elongation. Involved in double-strand break (DSB) repair via homologous recombination in S-phase by promoting the recruitment of TOPBP1 to DNA damage sites. Mechanistically, HTATSF1 is (1) recruited to DNA damage sites in S-phase via interaction with poly-ADP-ribosylated RPA1 and (2) phosphorylated by CK2, promoting recruitment of TOPBP1, thereby facilitating RAD51 nucleofilaments formation and RPA displacement, followed by homologous recombination. In terms of biological role, (Microbial infection) In case of infection by HIV-1, it is up-regulated by the HIV-1 proteins NEF and gp120, acts as a cofactor required for the Tat-enhanced transcription of the virus. This Homo sapiens (Human) protein is 17S U2 SnRNP complex component HTATSF1.